Here is a 580-residue protein sequence, read N- to C-terminus: Arginine--tRNA ligase (580 aa).

The 'HIGH' region motif lies at 131–141; that stretch reads ANPTGPMHVGH.

Belongs to the class-I aminoacyl-tRNA synthetase family. Monomer.

The protein resides in the cytoplasm. The enzyme catalyses tRNA(Arg) + L-arginine + ATP = L-arginyl-tRNA(Arg) + AMP + diphosphate. The sequence is that of Arginine--tRNA ligase from Cereibacter sphaeroides (strain KD131 / KCTC 12085) (Rhodobacter sphaeroides).